A 317-amino-acid polypeptide reads, in one-letter code: Acetyl-coenzyme A carboxylase carboxyl transferase subunit alpha (317 aa).

The region spanning 40 to 293 (LEVRVREAIL…GDVIANALAE (254 aa)) is the CoA carboxyltransferase C-terminal domain.

It belongs to the AccA family. Acetyl-CoA carboxylase is a heterohexamer composed of biotin carboxyl carrier protein (AccB), biotin carboxylase (AccC) and two subunits each of ACCase subunit alpha (AccA) and ACCase subunit beta (AccD).

The protein localises to the cytoplasm. It carries out the reaction N(6)-carboxybiotinyl-L-lysyl-[protein] + acetyl-CoA = N(6)-biotinyl-L-lysyl-[protein] + malonyl-CoA. Its pathway is lipid metabolism; malonyl-CoA biosynthesis; malonyl-CoA from acetyl-CoA: step 1/1. Functionally, component of the acetyl coenzyme A carboxylase (ACC) complex. First, biotin carboxylase catalyzes the carboxylation of biotin on its carrier protein (BCCP) and then the CO(2) group is transferred by the carboxyltransferase to acetyl-CoA to form malonyl-CoA. The protein is Acetyl-coenzyme A carboxylase carboxyl transferase subunit alpha of Rhizobium etli (strain CIAT 652).